A 141-amino-acid polypeptide reads, in one-letter code: MSIEQTFSIIKPNAMKKNAIGDIVSMFEANGLKIAAAKITVLTTAKAEEFYAEHKARPFFGELVSFMTSGPVMLMCLQGEGAVLKNREIMGATDPKKANPGTVRAKFGDNVGENAVHGSDSPESAARELALFFEKHEICNV.

6 residues coordinate ATP: Lys11, Phe59, Arg87, Thr93, Arg104, and Asn114. The active-site Pros-phosphohistidine intermediate is His117.

This sequence belongs to the NDK family. In terms of assembly, homotetramer. The cofactor is Mg(2+).

It is found in the cytoplasm. It catalyses the reaction a 2'-deoxyribonucleoside 5'-diphosphate + ATP = a 2'-deoxyribonucleoside 5'-triphosphate + ADP. It carries out the reaction a ribonucleoside 5'-diphosphate + ATP = a ribonucleoside 5'-triphosphate + ADP. Functionally, major role in the synthesis of nucleoside triphosphates other than ATP. The ATP gamma phosphate is transferred to the NDP beta phosphate via a ping-pong mechanism, using a phosphorylated active-site intermediate. The protein is Nucleoside diphosphate kinase of Bdellovibrio bacteriovorus (strain ATCC 15356 / DSM 50701 / NCIMB 9529 / HD100).